A 260-amino-acid polypeptide reads, in one-letter code: Phosphatidylglycerol--prolipoprotein diacylglyceryl transferase (260 aa).

Helical transmembrane passes span valine 17–phenylalanine 37, leucine 52–isoleucine 72, isoleucine 85–tryptophan 105, and phenylalanine 113–glycine 133. Arginine 134 is an a 1,2-diacyl-sn-glycero-3-phospho-(1'-sn-glycerol) binding site. Transmembrane regions (helical) follow at residues valine 170–isoleucine 190, glycine 198–valine 218, and glycine 227–isoleucine 247.

The protein belongs to the Lgt family.

It localises to the cell membrane. The catalysed reaction is L-cysteinyl-[prolipoprotein] + a 1,2-diacyl-sn-glycero-3-phospho-(1'-sn-glycerol) = an S-1,2-diacyl-sn-glyceryl-L-cysteinyl-[prolipoprotein] + sn-glycerol 1-phosphate + H(+). Its pathway is protein modification; lipoprotein biosynthesis (diacylglyceryl transfer). Its function is as follows. Catalyzes the transfer of the diacylglyceryl group from phosphatidylglycerol to the sulfhydryl group of the N-terminal cysteine of a prolipoprotein, the first step in the formation of mature lipoproteins. In Dehalococcoides mccartyi (strain ATCC BAA-2266 / KCTC 15142 / 195) (Dehalococcoides ethenogenes (strain 195)), this protein is Phosphatidylglycerol--prolipoprotein diacylglyceryl transferase.